Reading from the N-terminus, the 88-residue chain is Large ribosomal subunit protein eL34 (88 aa).

The segment at 41-72 is disordered; it reads RPLNGIPRGRPNELRKLPKTKKRPERPMPNLC.

This sequence belongs to the eukaryotic ribosomal protein eL34 family.

This Thermococcus sibiricus (strain DSM 12597 / MM 739) protein is Large ribosomal subunit protein eL34.